We begin with the raw amino-acid sequence, 169 residues long: Phosphopantetheine adenylyltransferase (169 aa).

Ser10 contributes to the substrate binding site. ATP is bound by residues Ser10–Phe11 and His18. Positions 42, 79, and 93 each coordinate substrate. ATP-binding positions include Gly94–Arg96, Glu104, and Val129–Thr135.

This sequence belongs to the bacterial CoaD family. As to quaternary structure, homohexamer. Mg(2+) is required as a cofactor.

The protein localises to the cytoplasm. The catalysed reaction is (R)-4'-phosphopantetheine + ATP + H(+) = 3'-dephospho-CoA + diphosphate. The protein operates within cofactor biosynthesis; coenzyme A biosynthesis; CoA from (R)-pantothenate: step 4/5. Reversibly transfers an adenylyl group from ATP to 4'-phosphopantetheine, yielding dephospho-CoA (dPCoA) and pyrophosphate. The protein is Phosphopantetheine adenylyltransferase of Rhodopseudomonas palustris (strain TIE-1).